The chain runs to 354 residues: Photosystem II D2 protein (354 aa).

Thr2 is modified (N-acetylthreonine). Residue Thr2 is modified to Phosphothreonine. A helical transmembrane segment spans residues 42–62; sequence CAYFALGGWFTGTTFVTSWYT. Chlorophyll a is bound at residue His119. The helical transmembrane segment at 126–142 threads the bilayer; sequence GFMLRQFELARSVQLRP. Gln131 and Asn144 together coordinate pheophytin a. A helical transmembrane segment spans residues 154–167; the sequence is VFVSVFLIYPLGQS. Residue His199 participates in chlorophyll a binding. A helical membrane pass occupies residues 209-229; sequence AALLCAIHGATVENTLFEDGD. The a plastoquinone site is built by His216 and Phe263. Position 216 (His216) interacts with Fe cation. A Fe cation-binding site is contributed by His270. Residues 280–296 form a helical membrane-spanning segment; sequence GLWMSALGVVGLALNLR.

The protein belongs to the reaction center PufL/M/PsbA/D family. As to quaternary structure, PSII is composed of 1 copy each of membrane proteins PsbA, PsbB, PsbC, PsbD, PsbE, PsbF, PsbH, PsbI, PsbJ, PsbK, PsbL, PsbM, PsbT, PsbX, PsbY, PsbZ, Psb30/Ycf12, at least 3 peripheral proteins of the oxygen-evolving complex and a large number of cofactors. It forms dimeric complexes. Requires The D1/D2 heterodimer binds P680, chlorophylls that are the primary electron donor of PSII, and subsequent electron acceptors. It shares a non-heme iron and each subunit binds pheophytin, quinone, additional chlorophylls, carotenoids and lipids. There is also a Cl(-1) ion associated with D1 and D2, which is required for oxygen evolution. The PSII complex binds additional chlorophylls, carotenoids and specific lipids. as cofactor.

Its subcellular location is the plastid. The protein resides in the chloroplast thylakoid membrane. It carries out the reaction 2 a plastoquinone + 4 hnu + 2 H2O = 2 a plastoquinol + O2. Functionally, photosystem II (PSII) is a light-driven water:plastoquinone oxidoreductase that uses light energy to abstract electrons from H(2)O, generating O(2) and a proton gradient subsequently used for ATP formation. It consists of a core antenna complex that captures photons, and an electron transfer chain that converts photonic excitation into a charge separation. The D1/D2 (PsbA/PsbD) reaction center heterodimer binds P680, the primary electron donor of PSII as well as several subsequent electron acceptors. D2 is needed for assembly of a stable PSII complex. The sequence is that of Photosystem II D2 protein from Piper cenocladum (Ant piper).